The sequence spans 298 residues: ATP phosphoribosyltransferase (298 aa).

The protein belongs to the ATP phosphoribosyltransferase family. Long subfamily. Requires Mg(2+) as cofactor.

Its subcellular location is the cytoplasm. The enzyme catalyses 1-(5-phospho-beta-D-ribosyl)-ATP + diphosphate = 5-phospho-alpha-D-ribose 1-diphosphate + ATP. The protein operates within amino-acid biosynthesis; L-histidine biosynthesis; L-histidine from 5-phospho-alpha-D-ribose 1-diphosphate: step 1/9. Feedback inhibited by histidine. Functionally, catalyzes the condensation of ATP and 5-phosphoribose 1-diphosphate to form N'-(5'-phosphoribosyl)-ATP (PR-ATP). Has a crucial role in the pathway because the rate of histidine biosynthesis seems to be controlled primarily by regulation of HisG enzymatic activity. This Vibrio campbellii (strain ATCC BAA-1116) protein is ATP phosphoribosyltransferase.